A 149-amino-acid polypeptide reads, in one-letter code: Large ribosomal subunit protein uL22 (149 aa).

Belongs to the universal ribosomal protein uL22 family. In terms of assembly, part of the 50S ribosomal subunit.

Its function is as follows. This protein binds specifically to 23S rRNA. It makes multiple contacts with different domains of the 23S rRNA in the assembled 50S subunit and ribosome. Functionally, the globular domain of the protein is located near the polypeptide exit tunnel on the outside of the subunit, while an extended beta-hairpin is found that lines the wall of the exit tunnel in the center of the 70S ribosome. The sequence is that of Large ribosomal subunit protein uL22 from Picrophilus torridus (strain ATCC 700027 / DSM 9790 / JCM 10055 / NBRC 100828 / KAW 2/3).